The primary structure comprises 147 residues: NAD(P)H-quinone oxidoreductase subunit N (147 aa).

Belongs to the complex I NdhN subunit family. As to quaternary structure, NDH-1 can be composed of about 15 different subunits; different subcomplexes with different compositions have been identified which probably have different functions.

Its subcellular location is the cellular thylakoid membrane. It carries out the reaction a plastoquinone + NADH + (n+1) H(+)(in) = a plastoquinol + NAD(+) + n H(+)(out). It catalyses the reaction a plastoquinone + NADPH + (n+1) H(+)(in) = a plastoquinol + NADP(+) + n H(+)(out). Its function is as follows. NDH-1 shuttles electrons from an unknown electron donor, via FMN and iron-sulfur (Fe-S) centers, to quinones in the respiratory and/or the photosynthetic chain. The immediate electron acceptor for the enzyme in this species is believed to be plastoquinone. Couples the redox reaction to proton translocation, and thus conserves the redox energy in a proton gradient. Cyanobacterial NDH-1 also plays a role in inorganic carbon-concentration. The sequence is that of NAD(P)H-quinone oxidoreductase subunit N from Synechococcus sp. (strain JA-2-3B'a(2-13)) (Cyanobacteria bacterium Yellowstone B-Prime).